The sequence spans 159 residues: UPF0587 protein v1g245604 (159 aa).

Zn(2+)-binding residues include Cys33, Cys36, Cys67, and Cys70.

It belongs to the UPF0587 family.

The sequence is that of UPF0587 protein v1g245604 from Nematostella vectensis (Starlet sea anemone).